A 379-amino-acid chain; its full sequence is dTDP-3-amino-3,4,6-trideoxy-alpha-D-glucose transaminase (379 aa).

Pyridoxal 5'-phosphate-binding positions include G67, Q167, 188–193 (SFYPGK), Y221, Y227, 235–237 (NSR), and Y318. K193 carries the post-translational modification N6-(pyridoxal phosphate)lysine.

Belongs to the degT/dnrJ/eryC1 family. As to quaternary structure, homodimer. Pyridoxal 5'-phosphate serves as cofactor.

It catalyses the reaction dTDP-3-amino-3,4,6-trideoxy-alpha-D-glucose + 2-oxoglutarate = dTDP-3-dehydro-4,6-dideoxy-alpha-D-glucose + L-glutamate. The protein operates within antibiotic biosynthesis. Involved in the biosynthesis of dTDP-alpha-D-desosamine, a sugar found in several bacterial macrolide antibiotics. Catalyzes the reversible transfer of the amino group from L-glutamate to the C-3 position of dTDP-3-keto-4,6-deoxyglucose to yield dTDP-3-amino-3,4,6-trideoxyglucose. In Streptomyces venezuelae, this protein is dTDP-3-amino-3,4,6-trideoxy-alpha-D-glucose transaminase.